The primary structure comprises 228 residues: Transmembrane protein 186 (228 aa).

Topologically, residues 1 to 93 are mitochondrial matrix; that stretch reads MDMMMMSTRL…RGLRALSRLK (93 aa). Residues 94 to 112 form a helical membrane-spanning segment; sequence LLQTGITVVLLPTVYYLHL. Topologically, residues 113–118 are mitochondrial intermembrane; it reads QGQASV. The helical transmembrane segment at 119 to 141 threads the bilayer; the sequence is LVLNRSIGIALFAGVMLYSISHF. The Mitochondrial matrix segment spans residues 142–228; sequence VRRVVGMMYL…AFGKVFGSLS (87 aa).

Belongs to the TMEM186 family.

Its subcellular location is the mitochondrion inner membrane. Functionally, may be required for efficient assembly of the mitochondrial complex I. The polypeptide is Transmembrane protein 186 (Danio rerio (Zebrafish)).